Reading from the N-terminus, the 131-residue chain is MKKTTVINSELSTVIAGMGHMDWLSIGDAGMPVPMGTQKIDLALTKQLPSFQDVLKNVLSELAVQKIYLAEEIKTQNPEQLAAIQALLPDVEVAFVPHSQLKQDLAKTHAFVRTGEMTPFSNIILESGVTF.

The Proton donor role is filled by His20. Substrate is bound by residues Asp28, His98, and 120-122 (FSN).

It belongs to the RbsD / FucU family. RbsD subfamily. As to quaternary structure, homodecamer.

The protein localises to the cytoplasm. It catalyses the reaction beta-D-ribopyranose = beta-D-ribofuranose. It participates in carbohydrate metabolism; D-ribose degradation; D-ribose 5-phosphate from beta-D-ribopyranose: step 1/2. Catalyzes the interconversion of beta-pyran and beta-furan forms of D-ribose. This chain is D-ribose pyranase, found in Levilactobacillus brevis (strain ATCC 367 / BCRC 12310 / CIP 105137 / JCM 1170 / LMG 11437 / NCIMB 947 / NCTC 947) (Lactobacillus brevis).